Here is a 375-residue protein sequence, read N- to C-terminus: Chaperone protein DnaJ (375 aa).

A J domain is found at 5–70 (DYYEVLGVER…SKRAAFDQYG (66 aa)). The segment at 134–212 (GTTVSIRVPT…CHGEGRVEEY (79 aa)) adopts a CR-type zinc-finger fold. Cysteine 147, cysteine 150, cysteine 164, cysteine 167, cysteine 186, cysteine 189, cysteine 200, and cysteine 203 together coordinate Zn(2+). CXXCXGXG motif repeat units lie at residues 147-154 (CQPCDGSG), 164-171 (CPTCGGIG), 186-193 (CPRCHGQG), and 200-207 (CTSCHGEG).

The protein belongs to the DnaJ family. In terms of assembly, homodimer. Requires Zn(2+) as cofactor.

It localises to the cytoplasm. In terms of biological role, participates actively in the response to hyperosmotic and heat shock by preventing the aggregation of stress-denatured proteins and by disaggregating proteins, also in an autonomous, DnaK-independent fashion. Unfolded proteins bind initially to DnaJ; upon interaction with the DnaJ-bound protein, DnaK hydrolyzes its bound ATP, resulting in the formation of a stable complex. GrpE releases ADP from DnaK; ATP binding to DnaK triggers the release of the substrate protein, thus completing the reaction cycle. Several rounds of ATP-dependent interactions between DnaJ, DnaK and GrpE are required for fully efficient folding. Also involved, together with DnaK and GrpE, in the DNA replication of plasmids through activation of initiation proteins. This chain is Chaperone protein DnaJ, found in Pseudomonas putida (strain ATCC 47054 / DSM 6125 / CFBP 8728 / NCIMB 11950 / KT2440).